A 398-amino-acid polypeptide reads, in one-letter code: MVPPPSNPQQVQQFLSSALSQRGPSSVPYEESNKWLIRQHLLNLISSYPSLEPKTASFMHNDGRSVNLLQADGTIPMPFHGVTYNIPVIIWLLESYPRHPPCVYVNPTADMIIKRPHAHVTPSGLVSLPYLQNWVYPSSNLVDLVSDLSAAFARDPPLYSRRRPQPPPPSPPTVYDSSLSRPPSADQSLPRPFPPSPYGGGVSRVQVQHVHHQQQSDDAAEVFKRNAINKMVEMVHSDLVSMRRAREAEAEELLSLQAGLKRREDELNIGLKEMVEEKETLEQQLQIISMNTDILDSWVRENQGKTKNLVDLDVDNAFECGDTLSKQMLECTALDLAIEDAIYSLDKSFQDGVVPFDQYLRNVRLLSREQFFHRATGSKVRAAQMEVQVAAIAGRLHS.

One can recognise a UEV domain in the interval 18 to 162; sequence ALSQRGPSSV…ARDPPLYSRR (145 aa). Residues 157–202 are disordered; it reads PLYSRRRPQPPPPSPPTVYDSSLSRPPSADQSLPRPFPPSPYGGGV. A compositionally biased stretch (polar residues) spans 175–187; the sequence is YDSSLSRPPSADQ. Positions 247 to 291 form a coiled coil; it reads EAEAEELLSLQAGLKRREDELNIGLKEMVEEKETLEQQLQIISMN. The SB domain maps to 322–390; the sequence is DTLSKQMLEC…RAAQMEVQVA (69 aa).

The protein belongs to the ubiquitin-conjugating enzyme family. UEV subfamily. As to quaternary structure, component of the endosomal sorting required for transport complex I (ESCRT-I), composed of ELC, VPS28 and VPS37. Interacts with VPS28 and VPS37. Binds ubiquitin in vitro. Interacts with FREE1. Interacts with TOL9/TOM1D. Interacts with BRO1/ALIX. Interacts with SINAT1, SINAT2, SINAT3 and SINAT4. Post-translationally, ubiquitinated by SINAT1, SINAT2, SINAT3 and SINAT4 for subsequent proteasomal degradation. As to expression, expressed in roots, stems, leaves and flowers.

It is found in the early endosome. Its subcellular location is the late endosome. The protein localises to the prevacuolar compartment. In terms of biological role, component of the ESCRT-I complex (endosomal sorting complex required for transport I), a regulator of vesicular trafficking process. Required for the sorting of endocytic ubiquitinated cargos into multivesicular bodies (MVBs). May control nuclear division through the microtubule cytoskeleton. This Arabidopsis thaliana (Mouse-ear cress) protein is Protein ELC.